Reading from the N-terminus, the 194-residue chain is Large ribosomal subunit protein eL15 (194 aa).

Residues 158–194 (ANRGLTSAGKKGRGLMYKGKGAEKARPGVRANGKKTK) form a disordered region.

This sequence belongs to the eukaryotic ribosomal protein eL15 family.

The protein is Large ribosomal subunit protein eL15 of Methanococcus maripaludis (strain DSM 14266 / JCM 13030 / NBRC 101832 / S2 / LL).